The primary structure comprises 388 residues: LL-diaminopimelate aminotransferase (388 aa).

Residues Y16 and G41 each contribute to the substrate site. Residues Y70, 104–105, Y129, N179, Y210, and 239–241 contribute to the pyridoxal 5'-phosphate site; these read SK and SLS. 3 residues coordinate substrate: K105, Y129, and N179. The residue at position 242 (K242) is an N6-(pyridoxal phosphate)lysine. Residue R250 coordinates pyridoxal 5'-phosphate. R368 contributes to the substrate binding site.

Belongs to the class-I pyridoxal-phosphate-dependent aminotransferase family. LL-diaminopimelate aminotransferase subfamily. In terms of assembly, homodimer. Pyridoxal 5'-phosphate serves as cofactor.

The catalysed reaction is (2S,6S)-2,6-diaminopimelate + 2-oxoglutarate = (S)-2,3,4,5-tetrahydrodipicolinate + L-glutamate + H2O + H(+). It participates in amino-acid biosynthesis; L-lysine biosynthesis via DAP pathway; LL-2,6-diaminopimelate from (S)-tetrahydrodipicolinate (aminotransferase route): step 1/1. Involved in the synthesis of meso-diaminopimelate (m-DAP or DL-DAP), required for both lysine and peptidoglycan biosynthesis. Catalyzes the direct conversion of tetrahydrodipicolinate to LL-diaminopimelate. The chain is LL-diaminopimelate aminotransferase from Maridesulfovibrio salexigens (strain ATCC 14822 / DSM 2638 / NCIMB 8403 / VKM B-1763) (Desulfovibrio salexigens).